Reading from the N-terminus, the 289-residue chain is MRTLQGWLLPVFMLPMAVYAQEATVKEVHDAPAVRGSIIANMLQEHDNPFTLYPYDTNYLIYTQTSDLNKEAIASYDWAENARKDEVKFQLSLAFPLWRGILGPNSVLGASYTQKSWWQLSNSEESSPFRETNYEPQLFLGFATDYRFAGWTLRDVEMGYNHDSNGRSDPTSRSWNRLYTRLMAENGNWLVEVKPWYVVGNTDDNPDITKYMGYYQLKIGYHLGDAVLSAKGQYNWNTGYGGAELGLSYPITKHVRLYTQVYSGYGESLIDYNFNQTRVGVGVMLNDLF.

The signal sequence occupies residues 1 to 20; sequence MRTLQGWLLPVFMLPMAVYA. The Periplasmic segment spans residues 21 to 52; that stretch reads QEATVKEVHDAPAVRGSIIANMLQEHDNPFTL. A beta stranded membrane pass occupies residues 53–65; that stretch reads YPYDTNYLIYTQT. Residues 66–84 lie on the Extracellular side of the membrane; that stretch reads SDLNKEAIASYDWAENARK. A beta stranded membrane pass occupies residues 85 to 99; sequence DEVKFQLSLAFPLWR. The Periplasmic portion of the chain corresponds to 100-105; the sequence is GILGPN. A beta stranded transmembrane segment spans residues 106-118; the sequence is SVLGASYTQKSWW. Residues 119–128 lie on the Extracellular side of the membrane; that stretch reads QLSNSEESSP. Ser126 serves as a coordination point for Ca(2+). The beta stranded transmembrane segment at 129–148 threads the bilayer; it reads FRETNYEPQLFLGFATDYRF. Topologically, residues 149 to 150 are periplasmic; that stretch reads AG. Residues 151–164 form a beta stranded membrane-spanning segment; the sequence is WTLRDVEMGYNHDS. The active-site Proton acceptor is His162. The active-site Nucleophile is Ser164. The Extracellular segment spans residues 165-173; it reads NGRSDPTSR. Residues Arg167 and Ser172 each contribute to the Ca(2+) site. Residues 174–186 form a beta stranded membrane-spanning segment; sequence SWNRLYTRLMAEN. Topologically, residues 187 to 188 are periplasmic; the sequence is GN. A beta stranded transmembrane segment spans residues 189-198; it reads WLVEVKPWYV. The Extracellular portion of the chain corresponds to 199–216; the sequence is VGNTDDNPDITKYMGYYQ. Asp204 contacts Ca(2+). Residues 217 to 223 form a beta stranded membrane-spanning segment; the sequence is LKIGYHL. Topologically, residues 224–225 are periplasmic; it reads GD. A beta stranded transmembrane segment spans residues 226-234; it reads AVLSAKGQY. The Extracellular segment spans residues 235-241; it reads NWNTGYG. A beta stranded membrane pass occupies residues 242–250; sequence GAELGLSYP. Residues 251–255 are Periplasmic-facing; that stretch reads ITKHV. A beta stranded membrane pass occupies residues 256–265; the sequence is RLYTQVYSGY. The Extracellular segment spans residues 266-274; it reads GESLIDYNF. Residues 275 to 286 traverse the membrane as a beta stranded segment; the sequence is NQTRVGVGVMLN. Residues 287–289 are Periplasmic-facing; that stretch reads DLF.

Belongs to the phospholipase A1 family. Homodimer; dimerization is reversible, and the dimeric form is the active one. It depends on Ca(2+) as a cofactor.

The protein resides in the cell outer membrane. The enzyme catalyses a 1,2-diacyl-sn-glycero-3-phosphocholine + H2O = a 2-acyl-sn-glycero-3-phosphocholine + a fatty acid + H(+). It catalyses the reaction a 1,2-diacyl-sn-glycero-3-phosphocholine + H2O = a 1-acyl-sn-glycero-3-phosphocholine + a fatty acid + H(+). Functionally, hydrolysis of phosphatidylcholine with phospholipase A2 (EC 3.1.1.4) and phospholipase A1 (EC 3.1.1.32) activities. This is Phospholipase A1 (pldA) from Escherichia coli O157:H7.